A 425-amino-acid polypeptide reads, in one-letter code: Multifunctional CCA protein (425 aa).

ATP contacts are provided by Gly8 and Arg11. 2 residues coordinate CTP: Gly8 and Arg11. Mg(2+) contacts are provided by Asp21 and Asp23. Residues Arg91, Arg141, and Arg144 each contribute to the ATP site. Arg91, Arg141, and Arg144 together coordinate CTP. An HD domain is found at 230–331 (TGVHLMMVLD…VRLLERCDAI (102 aa)).

The protein belongs to the tRNA nucleotidyltransferase/poly(A) polymerase family. Bacterial CCA-adding enzyme type 1 subfamily. Monomer. Can also form homodimers and oligomers. The cofactor is Mg(2+). Ni(2+) is required as a cofactor.

The catalysed reaction is a tRNA precursor + 2 CTP + ATP = a tRNA with a 3' CCA end + 3 diphosphate. It carries out the reaction a tRNA with a 3' CCA end + 2 CTP + ATP = a tRNA with a 3' CCACCA end + 3 diphosphate. In terms of biological role, catalyzes the addition and repair of the essential 3'-terminal CCA sequence in tRNAs without using a nucleic acid template. Adds these three nucleotides in the order of C, C, and A to the tRNA nucleotide-73, using CTP and ATP as substrates and producing inorganic pyrophosphate. tRNA 3'-terminal CCA addition is required both for tRNA processing and repair. Also involved in tRNA surveillance by mediating tandem CCA addition to generate a CCACCA at the 3' terminus of unstable tRNAs. While stable tRNAs receive only 3'-terminal CCA, unstable tRNAs are marked with CCACCA and rapidly degraded. The polypeptide is Multifunctional CCA protein (Acidovorax sp. (strain JS42)).